A 655-amino-acid polypeptide reads, in one-letter code: UvrABC system protein B (655 aa).

In terms of domain architecture, Helicase ATP-binding spans 25-181 (DGINKGEKEQ…IRKLVFMQYE (157 aa)). 38 to 45 (GVTGSGKT) contributes to the ATP binding site. Residues 91–114 (YYDYYQPEAYVPRTDTFIDKESSV) carry the Beta-hairpin motif. The Helicase C-terminal domain occupies 428–590 (QVEDLLGEVK…IVPKTTKRAL (163 aa)). The UVR domain occupies 615 to 650 (RLLISDLENDMKEAAAKLDFERAASLRDQIATLKGL).

Belongs to the UvrB family. Forms a heterotetramer with UvrA during the search for lesions. Interacts with UvrC in an incision complex.

It localises to the cytoplasm. In terms of biological role, the UvrABC repair system catalyzes the recognition and processing of DNA lesions. A damage recognition complex composed of 2 UvrA and 2 UvrB subunits scans DNA for abnormalities. Upon binding of the UvrA(2)B(2) complex to a putative damaged site, the DNA wraps around one UvrB monomer. DNA wrap is dependent on ATP binding by UvrB and probably causes local melting of the DNA helix, facilitating insertion of UvrB beta-hairpin between the DNA strands. Then UvrB probes one DNA strand for the presence of a lesion. If a lesion is found the UvrA subunits dissociate and the UvrB-DNA preincision complex is formed. This complex is subsequently bound by UvrC and the second UvrB is released. If no lesion is found, the DNA wraps around the other UvrB subunit that will check the other stand for damage. In Methanobrevibacter smithii (strain ATCC 35061 / DSM 861 / OCM 144 / PS), this protein is UvrABC system protein B.